The chain runs to 689 residues: Beta-adrenergic receptor kinase 1 (689 aa).

Residues M1–D190 form an N-terminal region. Residues T54–C175 enclose the RGS domain. Residues F191 to F453 form the Protein kinase domain. Residues I197–V205 and K220 contribute to the ATP site. D317 serves as the catalytic Proton acceptor. Residues R454–V521 enclose the AGC-kinase C-terminal domain. The PH domain maps to D558–R652. Position 670 is a phosphoserine (S670).

The protein belongs to the protein kinase superfamily. AGC Ser/Thr protein kinase family. GPRK subfamily. As to quaternary structure, interacts with the heterodimer formed by GNB1 and GNG2. Interacts with GIT1. Interacts with, and phosphorylates chemokine-stimulated CCR5. Interacts with ARRB1. Interacts with LPAR1 and LPAR2. Interacts with RALA in response to LPAR1 activation. ADRBK1 and RALA mutually inhibit each other's binding to LPAR1. Interacts with ADRB2.

The protein resides in the cytoplasm. It localises to the cell membrane. The protein localises to the postsynapse. It is found in the presynapse. The catalysed reaction is [beta-adrenergic receptor] + ATP = [beta-adrenergic receptor]-phosphate + ADP + H(+). In contrast to other AGC family kinases, the catalytic activity is solely regulated by the binding of substrates and ligands, not by phosphorylation of the kinase domain. Functionally, specifically phosphorylates the agonist-occupied form of the beta-adrenergic and closely related receptors, probably inducing a desensitization of them. Key regulator of LPAR1 signaling. Competes with RALA for binding to LPAR1 thus affecting the signaling properties of the receptor. Desensitizes LPAR1 and LPAR2 in a phosphorylation-independent manner. Positively regulates ciliary smoothened (SMO)-dependent Hedgehog (Hh) signaling pathway by facilitating the trafficking of SMO into the cilium and the stimulation of SMO activity. Inhibits relaxation of airway smooth muscle in response to blue light. In Mus musculus (Mouse), this protein is Beta-adrenergic receptor kinase 1.